The sequence spans 106 residues: YcgL domain-containing protein HCH_02617 (106 aa).

The YcgL domain maps to 6–90 (RLISIFRSSK…VQDDYMMDVV (85 aa)).

The sequence is that of YcgL domain-containing protein HCH_02617 from Hahella chejuensis (strain KCTC 2396).